We begin with the raw amino-acid sequence, 121 residues long: Large ribosomal subunit protein uL22 (121 aa).

Belongs to the universal ribosomal protein uL22 family. In terms of assembly, part of the 50S ribosomal subunit.

In terms of biological role, this protein binds specifically to 23S rRNA; its binding is stimulated by other ribosomal proteins, e.g. L4, L17, and L20. It is important during the early stages of 50S assembly. It makes multiple contacts with different domains of the 23S rRNA in the assembled 50S subunit and ribosome. Its function is as follows. The globular domain of the protein is located near the polypeptide exit tunnel on the outside of the subunit, while an extended beta-hairpin is found that lines the wall of the exit tunnel in the center of the 70S ribosome. The chain is Large ribosomal subunit protein uL22 from Synechocystis sp. (strain ATCC 27184 / PCC 6803 / Kazusa).